A 156-amino-acid chain; its full sequence is Transcription elongation factor GreA (156 aa).

Positions 44–67 (ENAEYEAAKEKQAMIEGRIQDLCQ) form a coiled coil.

The protein belongs to the GreA/GreB family.

Functionally, necessary for efficient RNA polymerase transcription elongation past template-encoded arresting sites. The arresting sites in DNA have the property of trapping a certain fraction of elongating RNA polymerases that pass through, resulting in locked ternary complexes. Cleavage of the nascent transcript by cleavage factors such as GreA or GreB allows the resumption of elongation from the new 3'terminus. GreA releases sequences of 2 to 3 nucleotides. This chain is Transcription elongation factor GreA, found in Syntrophobacter fumaroxidans (strain DSM 10017 / MPOB).